Here is a 394-residue protein sequence, read N- to C-terminus: Elongation factor Tu (394 aa).

Positions 10–204 (KPHVNVGTIG…ALDSYIPTPE (195 aa)) constitute a tr-type G domain. The G1 stretch occupies residues 19–26 (GHVDHGKT). Position 19 to 26 (19 to 26 (GHVDHGKT)) interacts with GTP. Residue Thr26 coordinates Mg(2+). Positions 60–64 (GITIN) are G2. The tract at residues 81-84 (DCPG) is G3. GTP-binding positions include 81–85 (DCPGH) and 136–139 (NKCD). The tract at residues 136 to 139 (NKCD) is G4. A G5 region spans residues 174 to 176 (SAL).

The protein belongs to the TRAFAC class translation factor GTPase superfamily. Classic translation factor GTPase family. EF-Tu/EF-1A subfamily. As to quaternary structure, monomer.

It localises to the cytoplasm. It carries out the reaction GTP + H2O = GDP + phosphate + H(+). Functionally, GTP hydrolase that promotes the GTP-dependent binding of aminoacyl-tRNA to the A-site of ribosomes during protein biosynthesis. In Neisseria meningitidis serogroup A / serotype 4A (strain DSM 15465 / Z2491), this protein is Elongation factor Tu.